The following is an 800-amino-acid chain: Chondroitin sulfate synthase 1 (800 aa).

The Cytoplasmic segment spans residues 1–7 (MAARGRR). A helical; Signal-anchor for type II membrane protein transmembrane segment spans residues 8-28 (AWLSMLLGLVLGFVLASRLVL). Residues 29–800 (PRASELKRVG…GGSHGSARTA (772 aa)) are Lumenal-facing. The disordered stretch occupies residues 36-66 (RVGPRRRPSPEGCRPGQEASQPGGARGDARG). Asn188 and Asn622 each carry an N-linked (GlcNAc...) asparagine glycan. The a divalent metal cation site is built by Asp632 and His746.

This sequence belongs to the chondroitin N-acetylgalactosaminyltransferase family. It depends on Co(2+) as a cofactor. Requires Mn(2+) as cofactor. The cofactor is Cd(2+).

It is found in the golgi apparatus. It localises to the golgi stack membrane. The protein resides in the secreted. It carries out the reaction 3-O-(beta-D-GlcA-(1-&gt;3)-beta-D-GalNAc-(1-&gt;4)-beta-D-GlcA-(1-&gt;3)-beta-D-Gal-(1-&gt;3)-beta-D-Gal-(1-&gt;4)-beta-D-Xyl)-L-seryl-[protein] + UDP-N-acetyl-alpha-D-galactosamine = 3-O-(beta-D-GalNAc-(1-&gt;4)-beta-D-GlcA-(1-&gt;3)-beta-D-GalNAc-(1-&gt;4)-beta-D-GlcA-(1-&gt;3)-beta-D-Gal-(1-&gt;3)-beta-D-Gal-(1-&gt;4)-beta-D-Xyl)-L-seryl-[protein] + UDP + H(+). It catalyses the reaction 3-O-{beta-D-GlcA-(1-&gt;3)-[beta-D-GalNAc-(1-&gt;4)-beta-D-GlcA-(1-&gt;3)](n)-beta-D-GalNAc-(1-&gt;4)-beta-D-GlcA-(1-&gt;3)-beta-D-Gal-(1-&gt;3)-beta-D-Gal-(1-&gt;4)-beta-D-Xyl}-L-seryl-[protein] + UDP-N-acetyl-alpha-D-galactosamine = 3-O-{[beta-D-GalNAc-(1-&gt;4)-beta-D-GlcA-(1-&gt;3)](n+1)-beta-D-GalNAc-(1-&gt;4)-beta-D-GlcA-(1-&gt;3)-beta-D-Gal-(1-&gt;3)-beta-D-Gal-(1-&gt;4)-beta-D-Xyl}-L-seryl-[protein] + UDP + H(+). The catalysed reaction is 3-O-(beta-D-GalNAc-(1-&gt;4)-beta-D-GlcA-(1-&gt;3)-beta-D-Gal-(1-&gt;3)-beta-D-Gal-(1-&gt;4)-beta-D-Xyl)-L-seryl-[protein] + UDP-alpha-D-glucuronate = 3-O-(beta-D-GlcA-(1-&gt;3)-beta-D-GalNAc-(1-&gt;4)-beta-D-GlcA-(1-&gt;3)-beta-D-Gal-(1-&gt;3)-beta-D-Gal-(1-&gt;4)-beta-D-Xyl)-L-seryl-[protein] + UDP + H(+). The enzyme catalyses 3-O-{[beta-D-GalNAc-(1-&gt;4)-beta-D-GlcA-(1-&gt;3)](n)-beta-D-GalNAc-(1-&gt;4)-beta-D-GlcA-(1-&gt;3)-beta-D-Gal-(1-&gt;3)-beta-D-Gal-(1-&gt;4)-beta-D-Xyl}-L-seryl-[protein] + UDP-alpha-D-glucuronate = 3-O-{beta-D-GlcA-(1-&gt;3)-[beta-D-GalNAc-(1-&gt;4)-beta-D-GlcA-(1-&gt;3)](n)-beta-D-GalNAc-(1-&gt;4)-beta-D-GlcA-(1-&gt;3)-beta-D-Gal-(1-&gt;3)-beta-D-Gal-(1-&gt;4)-beta-D-Xyl}-L-seryl-[protein] + UDP + H(+). Its function is as follows. Has both beta-1,3-glucuronic acid and beta-1,4-N-acetylgalactosamine transferase activity. Transfers glucuronic acid (GlcUA) from UDP-GlcUA and N-acetylgalactosamine (GalNAc) from UDP-GalNAc to the non-reducing end of the elongating chondroitin polymer. Involved in the negative control of osteogenesis likely through the modulation of NOTCH signaling. The sequence is that of Chondroitin sulfate synthase 1 (Chsy1) from Mus musculus (Mouse).